Reading from the N-terminus, the 524-residue chain is Glutamyl-tRNA(Gln) amidotransferase subunit A (524 aa).

Active-site charge relay system residues include Lys109 and Ser184. Ser208 functions as the Acyl-ester intermediate in the catalytic mechanism.

Belongs to the amidase family. GatA subfamily. As to quaternary structure, heterotrimer of A, B and C subunits.

It carries out the reaction L-glutamyl-tRNA(Gln) + L-glutamine + ATP + H2O = L-glutaminyl-tRNA(Gln) + L-glutamate + ADP + phosphate + H(+). Allows the formation of correctly charged Gln-tRNA(Gln) through the transamidation of misacylated Glu-tRNA(Gln) in organisms which lack glutaminyl-tRNA synthetase. The reaction takes place in the presence of glutamine and ATP through an activated gamma-phospho-Glu-tRNA(Gln). This chain is Glutamyl-tRNA(Gln) amidotransferase subunit A, found in Tropheryma whipplei (strain TW08/27) (Whipple's bacillus).